Here is a 23-residue protein sequence, read N- to C-terminus: Phospholipase A2 homolog 4 (23 aa).

The protein belongs to the phospholipase A2 family. Group II subfamily. K49 sub-subfamily. As to quaternary structure, homodimer; non-covalently linked (probable alternative/compact dimer conformation in solution). As to expression, expressed by the venom gland.

The protein localises to the secreted. In terms of biological role, snake venom phospholipase A2 homolog that lacks enzymatic activity. Induces acute muscle damage after intramuscular injection in mice and disrupts negatively charged liposomes but not positively charged ones. Also exerts a weak anticoagulant effect only at concentrations of 40 ug/ml or higher. A model of myotoxic mechanism has been proposed: an apo Lys49-PLA2 is activated by the entrance of a hydrophobic molecule (e.g. fatty acid) at the hydrophobic channel of the protein leading to a reorientation of a monomer. This reorientation causes a transition between 'inactive' to 'active' states, causing alignment of C-terminal and membrane-docking sites (MDoS) side-by-side and putting the membrane-disruption sites (MDiS) in the same plane, exposed to solvent and in a symmetric position for both monomers. The MDoS region stabilizes the toxin on membrane by the interaction of charged residues with phospholipid head groups. Subsequently, the MDiS region destabilizes the membrane with penetration of hydrophobic residues. This insertion causes a disorganization of the membrane, allowing an uncontrolled influx of ions (i.e. calcium and sodium), and eventually triggering irreversible intracellular alterations and cell death. This is Phospholipase A2 homolog 4 from Bothrops asper (Terciopelo).